We begin with the raw amino-acid sequence, 400 residues long: PHD finger protein 24 (400 aa).

Gly2 is lipidated: N-myristoyl glycine. Positions 29-38 (RDRPSIRRGG) are enriched in basic and acidic residues. Positions 29 to 65 (RDRPSIRRGGELPGSRRGTVEGSVQEVQEEKEAEASA) are disordered. Arg36 is modified (omega-N-methylarginine). Ser43 is modified (phosphoserine). A Phosphothreonine modification is found at Thr47. Residue Ser51 is modified to Phosphoserine. The PHD-type zinc-finger motif lies at 129–190 (NDEMCDVCEV…TGWSCYYCDN (62 aa)). Position 307 is an omega-N-methylarginine (Arg307).

The sequence is that of PHD finger protein 24 from Mus musculus (Mouse).